Here is a 425-residue protein sequence, read N- to C-terminus: MGVSRVLYVEGGTPLKGELRVYPAKNAALPILAASLLTPEPITLVEVPRLRDVEVMLELLAHLGTQYAWEGRTLHLQTPEIKSTHAPYELVGQMRASFIVWGALLARAGEGHVSMPGGCAFGFRPVDQHIKALEALGAEVWEEDGTFHARRTRPLSGRVVFDLPTVGGTEQAMLAVALGGEATLVQAAVEPEVVDLGHFLALLGAEVEGLGSPIVRIKGAPRLKGGTYRIIPDRIEAGTYLLAAAATRGSLTLEGVRPDHLDALLDKLWRSGHRLEVGEDWIRFRATPDPAPFHVEAREYPGFPTDLQPIATAYLATVPGQSTVVDRIYPDRFTHVGELARMGAELYLRDRILTVQGRRLHGAQVKALDIRAGGALVVAALSAEGASEIEGVYFLERGYEHLTERLQALGARVHLRESPVALAAD.

25-26 (KN) is a binding site for phosphoenolpyruvate. Arg-95 serves as a coordination point for UDP-N-acetyl-alpha-D-glucosamine. Cys-119 serves as the catalytic Proton donor. Cys-119 carries the post-translational modification 2-(S-cysteinyl)pyruvic acid O-phosphothioketal. UDP-N-acetyl-alpha-D-glucosamine-binding positions include 124 to 128 (RPVDQ), Asp-306, and Ile-328.

The protein belongs to the EPSP synthase family. MurA subfamily.

It localises to the cytoplasm. The catalysed reaction is phosphoenolpyruvate + UDP-N-acetyl-alpha-D-glucosamine = UDP-N-acetyl-3-O-(1-carboxyvinyl)-alpha-D-glucosamine + phosphate. Its pathway is cell wall biogenesis; peptidoglycan biosynthesis. Functionally, cell wall formation. Adds enolpyruvyl to UDP-N-acetylglucosamine. The chain is UDP-N-acetylglucosamine 1-carboxyvinyltransferase from Thermus thermophilus (strain ATCC BAA-163 / DSM 7039 / HB27).